The sequence spans 142 residues: NTF2-related export protein 2 (142 aa).

The 120-residue stretch at 17-136 folds into the NTF2 domain; that stretch reads AAEEFVNIYY…WKIASDCFRF (120 aa).

Associates with NXF1, NXF2, NXF3 and NXF5.

It localises to the nucleus. Its subcellular location is the cytoplasm. Its function is as follows. Regulator of protein export for NES-containing proteins. Also plays a role in mRNA nuclear export. This Bos taurus (Bovine) protein is NTF2-related export protein 2 (NXT2).